Here is a 235-residue protein sequence, read N- to C-terminus: Ornithine decarboxylase antizyme 3 (235 aa).

Ser-9 and Ser-12 each carry phosphoserine.

The protein belongs to the ODC antizyme family. Interacts with ODC1 and thereby sterically blocks ODC homodimerization. Interacts with AZIN2; this interaction disrupts the interaction between the antizyme and ODC1. Interacts with GGN. As to expression, testis specific.

Its subcellular location is the nucleus. The protein localises to the cytoplasm. Its function is as follows. Ornithine decarboxylase (ODC) antizyme protein that negatively regulates ODC activity and intracellular polyamine biosynthesis and uptake in response to increased intracellular polyamine levels. Binds to ODC monomers, inhibiting the assembly of the functional ODC homodimers. Does not target the ODC monomers for degradation, which allows a protein synthesis-independent restoration of ODC activity. Stabilizes AZIN2 by interfering with its ubiquitination. Involved in the translocation of AZNI2 from ER-Golgi intermediate compartment (ERGIC) to the cytosol. Probably plays a key role in spermatogenesis by regulating the intracellular concentration of polyamines in haploid germ cells. The chain is Ornithine decarboxylase antizyme 3 (OAZ3) from Homo sapiens (Human).